Consider the following 538-residue polypeptide: Phosphoenolpyruvate carboxykinase (ATP) (538 aa).

Residue Arg-64 participates in substrate binding. Residue Arg-152 coordinates ATP. Tyr-205 and Lys-211 together coordinate substrate. ATP is bound by residues Lys-211, His-230, and 246 to 254; that span reads GLSGTGKTT. Positions 211 and 230 each coordinate Mn(2+). Asp-267 contributes to the Mn(2+) binding site. ATP contacts are provided by residues Glu-295, Arg-331, Arg-344, 447–448, and Thr-453; that span reads RI. Arg-331 is a binding site for substrate.

Belongs to the phosphoenolpyruvate carboxykinase (ATP) family. As to quaternary structure, monomer. Mn(2+) serves as cofactor.

The protein localises to the cytoplasm. It catalyses the reaction oxaloacetate + ATP = phosphoenolpyruvate + ADP + CO2. The protein operates within carbohydrate biosynthesis; gluconeogenesis. Functionally, involved in gluconeogenesis. Catalyzes the conversion of oxaloacetate (OAA) to phosphoenolpyruvate (PEP) through direct phosphoryl transfer between the nucleoside triphosphate and OAA. The sequence is that of Phosphoenolpyruvate carboxykinase (ATP) from Actinobacillus succinogenes (strain ATCC 55618 / DSM 22257 / CCUG 43843 / 130Z).